Reading from the N-terminus, the 374-residue chain is Methylthioribose-1-phosphate isomerase (374 aa).

Ser-2 carries the N-acetylserine modification. Asp-253 (proton donor) is an active-site residue.

The protein belongs to the eIF-2B alpha/beta/delta subunits family. MtnA subfamily.

The protein resides in the cytoplasm. The protein localises to the nucleus. It catalyses the reaction 5-(methylsulfanyl)-alpha-D-ribose 1-phosphate = 5-(methylsulfanyl)-D-ribulose 1-phosphate. Its pathway is amino-acid biosynthesis; L-methionine biosynthesis via salvage pathway; L-methionine from S-methyl-5-thio-alpha-D-ribose 1-phosphate: step 1/6. Catalyzes the interconversion of methylthioribose-1-phosphate (MTR-1-P) into methylthioribulose-1-phosphate (MTRu-1-P). This Arabidopsis thaliana (Mouse-ear cress) protein is Methylthioribose-1-phosphate isomerase.